The sequence spans 514 residues: Ankyrin repeat domain-containing protein 34B (514 aa).

ANK repeat units lie at residues 9 to 38, 42 to 79, 83 to 113, and 117 to 146; these read SEGN…YINE, RGET…DPNI, SGKT…DLSL, and SSYS…AKGK. Positions 220-249 are disordered; that stretch reads NDDTWDPGSPVRKPALAPKGPKLPHAPPWV. Ser-263 is modified (phosphoserine). Thr-272 is modified (phosphothreonine). Ser-296 carries the phosphoserine modification.

The protein belongs to the ANKRD34 family. Phosphorylated.

Its subcellular location is the cytoplasm. The protein resides in the nucleus. The protein is Ankyrin repeat domain-containing protein 34B (ANKRD34B) of Homo sapiens (Human).